Here is a 158-residue protein sequence, read N- to C-terminus: Glycosyl-phosphatidylinositol-anchored molecule-like protein (158 aa).

The first 17 residues, 1 to 17 (MLLFALLLAMELPLVAA), serve as a signal peptide directing secretion. The UPAR/Ly6 domain occupies 29–134 (LRCHDCAVIN…DEVTEEELPE (106 aa)). Intrachain disulfides connect Cys-31-Cys-55, Cys-34-Cys-42, Cys-48-Cys-73, Cys-77-Cys-104, and Cys-105-Cys-110.

It localises to the cell membrane. Its function is as follows. May play a role in the apoptotic pathway or cell-cycle regulation induced by p53/TP53 after DNA damage. This is Glycosyl-phosphatidylinositol-anchored molecule-like protein (GML) from Homo sapiens (Human).